The following is a 1415-amino-acid chain: Non-structural polyprotein 1AB (1415 aa).

Residues 104–142 are a coiled coil; sequence KLIHKANALQERLRLSQEEKATLALDVQFLQHENVRLKE. 5 consecutive transmembrane segments (helical) span residues 154–174, 239–259, 286–306, 313–333, and 344–364; these read MKWI…GGYA, VFYY…LAIG, VLPT…TLMV, LLAI…LCFM, and GLIA…LTGT. Catalysis depends on charge relay system; for serine protease activity residues His461, Asp489, and Ser551. Residues 587 to 616 are a coiled coil; sequence VKAPSRVELLKEEIERLKAQLNSAAENPAT. Position 693 is an O-(5'-phospho-RNA)-tyrosine (Tyr693). The interval 753 to 813 is disordered; that stretch reads FDQAKPTPAP…KNEPQPYSQT (61 aa). The span at 783-795 shows a compositional bias: basic and acidic residues; the sequence is SQKKEKQLEHEQQ. The span at 800–813 shows a compositional bias: polar residues; sequence TKPQKNEPQPYSQT. The region spanning 1160–1286 is the RdRp catalytic domain; sequence KHFIEFDWTR…TTPSVPDDYE (127 aa).

This sequence belongs to the astroviridae polyprotein 1AB family. As to quaternary structure, monomer. In terms of processing, cleaved by the viral and host proteases. The protease is probably autocatalytically cleaved.

The protein resides in the host membrane. It carries out the reaction RNA(n) + a ribonucleoside 5'-triphosphate = RNA(n+1) + diphosphate. Its function is as follows. Responsible for the cleavage of the polyprotein into functional products. Functionally, covalently attached to the 5' extremity of the genomic and subgenomic RNAs. It may serve as a primer for the replicase. This is Non-structural polyprotein 1AB (ORF1) from Human astrovirus-4 (HAstV-4).